A 261-amino-acid polypeptide reads, in one-letter code: Cytochrome c oxidase subunit 3 (261 aa).

Residues 1–15 (MVHQSHAYHMLKPSP) are Mitochondrial matrix-facing. Residues 16–34 (WPLTGALSALLMTSGLAMW) form a helical membrane-spanning segment. Residues 35–40 (FHFHST) are Mitochondrial intermembrane-facing. Residues 41–66 (TLLLTGMLTNALTMYQWWRDVVREST) form a helical membrane-spanning segment. The Mitochondrial matrix portion of the chain corresponds to 67–72 (YQGHHT). A helical transmembrane segment spans residues 73–105 (LPVQKGLRYGMILFITSEVFFFAGFFWAFYHSS). Topologically, residues 106 to 128 (LAPTPQLGGHWPPTGITPLNPLE) are mitochondrial intermembrane. Residues 129–152 (VPLLNTAVLLASGVSITWAHHSLM) form a helical membrane-spanning segment. At 153 to 155 (ENN) the chain is on the mitochondrial matrix side. The helical transmembrane segment at 156 to 183 (RTQMIQALLITILLGIYFTLLQASEYIE) threads the bilayer. Over 184 to 190 (APFTISD) the chain is Mitochondrial intermembrane. A helical transmembrane segment spans residues 191 to 223 (GIYGSTFFMTTGFHGLHVIIGSTFLTVCLSCQL). Residues 224–232 (LFHFTSKHH) lie on the Mitochondrial matrix side of the membrane. A helical membrane pass occupies residues 233–256 (FGFEAAAWYWHFVDVVWLFLYVSI). The Mitochondrial intermembrane portion of the chain corresponds to 257 to 261 (YWWGS).

It belongs to the cytochrome c oxidase subunit 3 family. In terms of assembly, component of the cytochrome c oxidase (complex IV, CIV), a multisubunit enzyme composed of 14 subunits. The complex is composed of a catalytic core of 3 subunits MT-CO1, MT-CO2 and MT-CO3, encoded in the mitochondrial DNA, and 11 supernumerary subunits COX4I, COX5A, COX5B, COX6A, COX6B, COX6C, COX7A, COX7B, COX7C, COX8 and NDUFA4, which are encoded in the nuclear genome. The complex exists as a monomer or a dimer and forms supercomplexes (SCs) in the inner mitochondrial membrane with NADH-ubiquinone oxidoreductase (complex I, CI) and ubiquinol-cytochrome c oxidoreductase (cytochrome b-c1 complex, complex III, CIII), resulting in different assemblies (supercomplex SCI(1)III(2)IV(1) and megacomplex MCI(2)III(2)IV(2)).

The protein resides in the mitochondrion inner membrane. The enzyme catalyses 4 Fe(II)-[cytochrome c] + O2 + 8 H(+)(in) = 4 Fe(III)-[cytochrome c] + 2 H2O + 4 H(+)(out). Its function is as follows. Component of the cytochrome c oxidase, the last enzyme in the mitochondrial electron transport chain which drives oxidative phosphorylation. The respiratory chain contains 3 multisubunit complexes succinate dehydrogenase (complex II, CII), ubiquinol-cytochrome c oxidoreductase (cytochrome b-c1 complex, complex III, CIII) and cytochrome c oxidase (complex IV, CIV), that cooperate to transfer electrons derived from NADH and succinate to molecular oxygen, creating an electrochemical gradient over the inner membrane that drives transmembrane transport and the ATP synthase. Cytochrome c oxidase is the component of the respiratory chain that catalyzes the reduction of oxygen to water. Electrons originating from reduced cytochrome c in the intermembrane space (IMS) are transferred via the dinuclear copper A center (CU(A)) of subunit 2 and heme A of subunit 1 to the active site in subunit 1, a binuclear center (BNC) formed by heme A3 and copper B (CU(B)). The BNC reduces molecular oxygen to 2 water molecules using 4 electrons from cytochrome c in the IMS and 4 protons from the mitochondrial matrix. This is Cytochrome c oxidase subunit 3 (MT-CO3) from Pongo pygmaeus (Bornean orangutan).